Consider the following 887-residue polypeptide: DNA gyrase subunit A (887 aa).

A Topo IIA-type catalytic domain is found at 35 to 501; the sequence is LPDVRDGLKP…GFEDLEDEDL (467 aa). The active-site O-(5'-phospho-DNA)-tyrosine intermediate is the Tyr-123. A GyrA-box motif is present at residues 528–534; the sequence is QNRGGRG. Positions 811–865 are disordered; sequence KEDAEDETNEDEQSTSTVSEDGTEQQREAVVNDETPGNAIHTEVIDSEENDEDGR. The segment covering 813-823 has biased composition (acidic residues); it reads DAEDETNEDEQ.

Belongs to the type II topoisomerase GyrA/ParC subunit family. In terms of assembly, heterotetramer, composed of two GyrA and two GyrB chains. In the heterotetramer, GyrA contains the active site tyrosine that forms a transient covalent intermediate with DNA, while GyrB binds cofactors and catalyzes ATP hydrolysis.

It is found in the cytoplasm. It catalyses the reaction ATP-dependent breakage, passage and rejoining of double-stranded DNA.. In terms of biological role, a type II topoisomerase that negatively supercoils closed circular double-stranded (ds) DNA in an ATP-dependent manner to modulate DNA topology and maintain chromosomes in an underwound state. Negative supercoiling favors strand separation, and DNA replication, transcription, recombination and repair, all of which involve strand separation. Also able to catalyze the interconversion of other topological isomers of dsDNA rings, including catenanes and knotted rings. Type II topoisomerases break and join 2 DNA strands simultaneously in an ATP-dependent manner. This is DNA gyrase subunit A from Staphylococcus aureus (strain MSSA476).